The following is a 148-amino-acid chain: MNVSFAPLFLVTLILLGVVSNNNSITISATILLLMQQTALIQFVPLVEKHGLNLGIILLTIGVLSPLVSGKAQVPPVAEFLNFKMISAVFIGIFVAWLAGRGVPLMGQQPVLITGLLIGTVIGVAFMGGIPVGPLIAAGILSFVVGKG.

4 helical membrane-spanning segments follow: residues Leu13–Met35, His50–Gly70, Phe80–Gly100, and Val121–Leu141.

Belongs to the UPF0756 family.

The protein resides in the cell membrane. This is UPF0756 membrane protein NMCC_1816 from Neisseria meningitidis serogroup C (strain 053442).